We begin with the raw amino-acid sequence, 329 residues long: Diaminopimelate epimerase (329 aa).

Substrate contacts are provided by asparagine 14 and asparagine 73. Residue cysteine 82 is the Proton donor of the active site. Substrate contacts are provided by residues 83–84 (GN), asparagine 170, asparagine 206, and 224–225 (ER). Cysteine 233 (proton acceptor) is an active-site residue. Substrate is bound at residue 234–235 (GT).

Belongs to the diaminopimelate epimerase family. As to quaternary structure, homodimer.

It localises to the cytoplasm. The enzyme catalyses (2S,6S)-2,6-diaminopimelate = meso-2,6-diaminopimelate. Its pathway is amino-acid biosynthesis; L-lysine biosynthesis via DAP pathway; DL-2,6-diaminopimelate from LL-2,6-diaminopimelate: step 1/1. Its function is as follows. Catalyzes the stereoinversion of LL-2,6-diaminopimelate (L,L-DAP) to meso-diaminopimelate (meso-DAP), a precursor of L-lysine and an essential component of the bacterial peptidoglycan. This is Diaminopimelate epimerase from Listeria monocytogenes serotype 4b (strain F2365).